The sequence spans 504 residues: Pre-mRNA-processing factor 19 (504 aa).

Ser2 bears the N-acetylserine mark. The 72-residue stretch at 2–73 (SLICSISNEV…KPPSATSIPA (72 aa)) folds into the U-box domain. A may mediate interaction with PSMC5 region spans residues 68 to 223 (ATSIPAILKA…VGLHSASIPG (156 aa)). An N6-acetyllysine mark is found at Lys122, Lys179, Lys244, and Lys261. Residues 219 to 259 (ASIPGILALDLCPSDTNKILTGGADKNVVVFDKSSEQILAT) form a WD 1 repeat. WD repeat units lie at residues 262–301 (GHTKKVTSVVFHPSQELVFSASPDATIRIWSVPNASCVQV), 304–345 (AHES…TKVT), 348–387 (TSGCSLTCAQFHPDGLIFGTGTMDSQIKIWDLKERTNVAN), 390–429 (GHSGPITSIAFSENGYYLATAADDSSVKLWDLRKLKNFKT), 433–472 (DNNFEVKSLIFDQSGTYLALGGTDVQIYICKQWTEILHFT), and 473–503 (EHSGLTTGVAFGHHAKFIASTGMDRSLKFYS).

This sequence belongs to the WD repeat PRP19 family. As to quaternary structure, homotetramer. Component of activated, catalytic and post-catalytic spliceosomes. Component of the Prp19 complex/PRP19C/Nineteen complex/NTC and related complexes described as PRP19-CDC5L splicing complex and PSO4 complex. A homotetramer of PRPF19, CDC5L, PLRG1 and BCAS2 constitute the core of those complexes. The interaction with CDC5L, PLRG1 and BCAS2 is direct within this core complex. At least three less stably associated proteins CTNNBL1, CWC15 and HSPA8 are found in the Prp19 complex. The Prp19 complex associates with the spliceosome during its assembly and remodeling recruiting additional proteins. Component of the XAB2 complex, a multimeric protein complex composed of XAB2, PRPF19, AQR, ZNF830, ISY1, and PPIE. Interacts with CWC22 and EIF4A3 in an RNA-independent manner. Interacts with RPA1 and RPA2; the PRP19-CDC5L complex is recruited to the sites of DNA repair where it interacts with the replication protein A complex (RPA). Interacts with SETMAR; required for SETMAR recruitment to site of DNA damage. Interacts with U2AF2; the interaction is direct and recruits the Prp19 complex to RNA polymerase II C-terminal domain (CTD) and the pre-mRNA. Interacts with PRPF3. Interacts with APEX1, DNTT and PSMB4. Interacts with PSMC5. Interacts with KNSTRN. Interacts (via N-terminus) with CDC5L. Interacts with KHDC4. Interacts with USB1. Interacts with DDX41.

The protein resides in the nucleus. It localises to the nucleoplasm. It is found in the cytoplasm. The protein localises to the cytoskeleton. Its subcellular location is the spindle. The protein resides in the lipid droplet. It carries out the reaction S-ubiquitinyl-[E2 ubiquitin-conjugating enzyme]-L-cysteine + [acceptor protein]-L-lysine = [E2 ubiquitin-conjugating enzyme]-L-cysteine + N(6)-ubiquitinyl-[acceptor protein]-L-lysine.. It functions in the pathway protein modification; protein ubiquitination. Ubiquitin-protein ligase which is a core component of several complexes mainly involved pre-mRNA splicing and DNA repair. Required for pre-mRNA splicing as component of the spliceosome. Core component of the PRP19C/Prp19 complex/NTC/Nineteen complex which is part of the spliceosome and participates in its assembly, its remodeling and is required for its activity. During assembly of the spliceosome, mediates 'Lys-63'-linked polyubiquitination of the U4 spliceosomal protein PRPF3. Ubiquitination of PRPF3 allows its recognition by the U5 component PRPF8 and stabilizes the U4/U5/U6 tri-snRNP spliceosomal complex. Recruited to RNA polymerase II C-terminal domain (CTD) and the pre-mRNA, it may also couple the transcriptional and spliceosomal machineries. The XAB2 complex, which contains PRPF19, is also involved in pre-mRNA splicing, transcription and transcription-coupled repair. Beside its role in pre-mRNA splicing PRPF19, as part of the PRP19-CDC5L complex, plays a role in the DNA damage response/DDR. It is recruited to the sites of DNA damage by the RPA complex where PRPF19 directly ubiquitinates RPA1 and RPA2. 'Lys-63'-linked polyubiquitination of the RPA complex allows the recruitment of the ATR-ATRIP complex and the activation of ATR, a master regulator of the DNA damage response. May also play a role in DNA double-strand break (DSB) repair by recruiting the repair factor SETMAR to altered DNA. As part of the PSO4 complex may also be involved in the DNA interstrand cross-links/ICLs repair process. In addition, may also mediate 'Lys-48'-linked polyubiquitination of substrates and play a role in proteasomal degradation. May play a role in the biogenesis of lipid droplets. May play a role in neural differentiation possibly through its function as part of the spliceosome. In Bos taurus (Bovine), this protein is Pre-mRNA-processing factor 19 (PRPF19).